The primary structure comprises 514 residues: Protein nucleotidyltransferase YdiU (514 aa).

Residues glycine 111, glycine 113, arginine 114, lysine 134, aspartate 146, glycine 147, arginine 197, and arginine 204 each coordinate ATP. Aspartate 276 acts as the Proton acceptor in catalysis. 2 residues coordinate Mg(2+): asparagine 277 and aspartate 286. Residue aspartate 286 coordinates ATP.

It belongs to the SELO family. The cofactor is Mg(2+). Requires Mn(2+) as cofactor.

The catalysed reaction is L-seryl-[protein] + ATP = 3-O-(5'-adenylyl)-L-seryl-[protein] + diphosphate. It catalyses the reaction L-threonyl-[protein] + ATP = 3-O-(5'-adenylyl)-L-threonyl-[protein] + diphosphate. The enzyme catalyses L-tyrosyl-[protein] + ATP = O-(5'-adenylyl)-L-tyrosyl-[protein] + diphosphate. It carries out the reaction L-histidyl-[protein] + UTP = N(tele)-(5'-uridylyl)-L-histidyl-[protein] + diphosphate. The catalysed reaction is L-seryl-[protein] + UTP = O-(5'-uridylyl)-L-seryl-[protein] + diphosphate. It catalyses the reaction L-tyrosyl-[protein] + UTP = O-(5'-uridylyl)-L-tyrosyl-[protein] + diphosphate. In terms of biological role, nucleotidyltransferase involved in the post-translational modification of proteins. It can catalyze the addition of adenosine monophosphate (AMP) or uridine monophosphate (UMP) to a protein, resulting in modifications known as AMPylation and UMPylation. The protein is Protein nucleotidyltransferase YdiU of Rhodococcus jostii (strain RHA1).